The primary structure comprises 236 residues: Ribosome maturation protein SDO1 homolog (236 aa).

This sequence belongs to the SDO1/SBDS family.

The chain is Ribosome maturation protein SDO1 homolog from Pyrococcus horikoshii (strain ATCC 700860 / DSM 12428 / JCM 9974 / NBRC 100139 / OT-3).